The chain runs to 227 residues: Large ribosomal subunit protein uL1 (227 aa).

The protein belongs to the universal ribosomal protein uL1 family. Part of the 50S ribosomal subunit.

In terms of biological role, binds directly to 23S rRNA. The L1 stalk is quite mobile in the ribosome, and is involved in E site tRNA release. Protein L1 is also a translational repressor protein, it controls the translation of the L11 operon by binding to its mRNA. This chain is Large ribosomal subunit protein uL1, found in Tropheryma whipplei (strain TW08/27) (Whipple's bacillus).